We begin with the raw amino-acid sequence, 278 residues long: Tryptophan synthase alpha chain (278 aa).

Catalysis depends on proton acceptor residues Glu50 and Asp61.

It belongs to the TrpA family. As to quaternary structure, tetramer of two alpha and two beta chains.

It catalyses the reaction (1S,2R)-1-C-(indol-3-yl)glycerol 3-phosphate + L-serine = D-glyceraldehyde 3-phosphate + L-tryptophan + H2O. Its pathway is amino-acid biosynthesis; L-tryptophan biosynthesis; L-tryptophan from chorismate: step 5/5. Its function is as follows. The alpha subunit is responsible for the aldol cleavage of indoleglycerol phosphate to indole and glyceraldehyde 3-phosphate. The polypeptide is Tryptophan synthase alpha chain (Rhodopseudomonas palustris (strain TIE-1)).